Here is a 1265-residue protein sequence, read N- to C-terminus: Methionine synthase (1265 aa).

Residues 19-338 (QDEIEAILQE…DHIREIAEAV (320 aa)) enclose the Hcy-binding domain. Zn(2+) contacts are provided by Cys260, Cys323, and Cys324. The Pterin-binding domain maps to 371–632 (FVNIGERCNV…IHKELLQLCE (262 aa)). (6S)-5,6,7,8-tetrahydrofolate contacts are provided by residues 382–384 (GSR), Asp449, Asn470, Asp537, Asn579, Arg585, and Arg591. The B12-binding N-terminal domain occupies 662-759 (QTDEWRNGPL…FMEKEREETK (98 aa)). Residues Glu709, 782–786 (GDVHD), His785, Ser830, Thr834, and Ala886 contribute to the methylcob(III)alamin site. Residues 772 to 907 (QGTIVLATVK…DENLKDEYFE (136 aa)) form the B12-binding domain. Positions 923 to 1265 (SLKERRYLTL…LGPILGYDTD (343 aa)) constitute an AdoMet activation domain. Residues Asp974, Arg1172, and 1227–1228 (YF) contribute to the S-adenosyl-L-methionine site. Thr1264 carries the phosphothreonine modification.

This sequence belongs to the vitamin-B12 dependent methionine synthase family. As to quaternary structure, monomer. Dimer. Forms a multiprotein complex with MMACHC, MMADHC and MTRR. It depends on methylcob(III)alamin as a cofactor. Zn(2+) is required as a cofactor.

It is found in the cytoplasm. It catalyses the reaction (6S)-5-methyl-5,6,7,8-tetrahydrofolate + L-homocysteine = (6S)-5,6,7,8-tetrahydrofolate + L-methionine. The protein operates within amino-acid biosynthesis; L-methionine biosynthesis via de novo pathway; L-methionine from L-homocysteine (MetH route): step 1/1. In terms of biological role, catalyzes the transfer of a methyl group from methylcob(III)alamin (MeCbl) to homocysteine, yielding enzyme-bound cob(I)alamin and methionine in the cytosol. MeCbl is an active form of cobalamin (vitamin B12) used as a cofactor for methionine biosynthesis. Cob(I)alamin form is regenerated to MeCbl by a transfer of a methyl group from 5-methyltetrahydrofolate. The processing of cobalamin in the cytosol occurs in a multiprotein complex composed of at least MMACHC, MMADHC, MTRR (methionine synthase reductase) and MTR which may contribute to shuttle safely and efficiently cobalamin towards MTR in order to produce methionine. This Bos taurus (Bovine) protein is Methionine synthase (MTR).